The primary structure comprises 346 residues: Phosphoribosylformylglycinamidine cyclo-ligase (346 aa).

This sequence belongs to the AIR synthase family.

Its subcellular location is the cytoplasm. It catalyses the reaction 2-formamido-N(1)-(5-O-phospho-beta-D-ribosyl)acetamidine + ATP = 5-amino-1-(5-phospho-beta-D-ribosyl)imidazole + ADP + phosphate + H(+). It functions in the pathway purine metabolism; IMP biosynthesis via de novo pathway; 5-amino-1-(5-phospho-D-ribosyl)imidazole from N(2)-formyl-N(1)-(5-phospho-D-ribosyl)glycinamide: step 2/2. This chain is Phosphoribosylformylglycinamidine cyclo-ligase, found in Aliivibrio fischeri (strain ATCC 700601 / ES114) (Vibrio fischeri).